A 116-amino-acid polypeptide reads, in one-letter code: Large ribosomal subunit protein bL17 (116 aa).

The protein belongs to the bacterial ribosomal protein bL17 family. As to quaternary structure, part of the 50S ribosomal subunit. Contacts protein L32.

The chain is Large ribosomal subunit protein bL17 from Prochlorococcus marinus (strain MIT 9301).